Consider the following 371-residue polypeptide: Queuine tRNA-ribosyltransferase (371 aa).

D90 (proton acceptor) is an active-site residue. Residues 90–94 (DSGGF), D144, Q188, and G215 each bind substrate. The RNA binding stretch occupies residues 246–252 (GVGTPED). D265 functions as the Nucleophile in the catalytic mechanism. The RNA binding; important for wobble base 34 recognition stretch occupies residues 270 to 274 (TRNAR). C303, C305, C308, and H334 together coordinate Zn(2+).

Belongs to the queuine tRNA-ribosyltransferase family. In terms of assembly, homodimer. Within each dimer, one monomer is responsible for RNA recognition and catalysis, while the other monomer binds to the replacement base PreQ1. Zn(2+) serves as cofactor.

It carries out the reaction 7-aminomethyl-7-carbaguanine + guanosine(34) in tRNA = 7-aminomethyl-7-carbaguanosine(34) in tRNA + guanine. It participates in tRNA modification; tRNA-queuosine biosynthesis. In terms of biological role, catalyzes the base-exchange of a guanine (G) residue with the queuine precursor 7-aminomethyl-7-deazaguanine (PreQ1) at position 34 (anticodon wobble position) in tRNAs with GU(N) anticodons (tRNA-Asp, -Asn, -His and -Tyr). Catalysis occurs through a double-displacement mechanism. The nucleophile active site attacks the C1' of nucleotide 34 to detach the guanine base from the RNA, forming a covalent enzyme-RNA intermediate. The proton acceptor active site deprotonates the incoming PreQ1, allowing a nucleophilic attack on the C1' of the ribose to form the product. After dissociation, two additional enzymatic reactions on the tRNA convert PreQ1 to queuine (Q), resulting in the hypermodified nucleoside queuosine (7-(((4,5-cis-dihydroxy-2-cyclopenten-1-yl)amino)methyl)-7-deazaguanosine). The chain is Queuine tRNA-ribosyltransferase from Neisseria gonorrhoeae (strain ATCC 700825 / FA 1090).